Reading from the N-terminus, the 420-residue chain is Serine hydroxymethyltransferase (420 aa).

(6S)-5,6,7,8-tetrahydrofolate-binding positions include Leu121 and 125–127 (GHL). Lys230 bears the N6-(pyridoxal phosphate)lysine mark. Residue 355 to 357 (SPF) coordinates (6S)-5,6,7,8-tetrahydrofolate.

It belongs to the SHMT family. In terms of assembly, homodimer. Pyridoxal 5'-phosphate serves as cofactor.

It localises to the cytoplasm. It catalyses the reaction (6R)-5,10-methylene-5,6,7,8-tetrahydrofolate + glycine + H2O = (6S)-5,6,7,8-tetrahydrofolate + L-serine. It participates in one-carbon metabolism; tetrahydrofolate interconversion. It functions in the pathway amino-acid biosynthesis; glycine biosynthesis; glycine from L-serine: step 1/1. Catalyzes the reversible interconversion of serine and glycine with tetrahydrofolate (THF) serving as the one-carbon carrier. This reaction serves as the major source of one-carbon groups required for the biosynthesis of purines, thymidylate, methionine, and other important biomolecules. Also exhibits THF-independent aldolase activity toward beta-hydroxyamino acids, producing glycine and aldehydes, via a retro-aldol mechanism. The chain is Serine hydroxymethyltransferase from Streptococcus mutans serotype c (strain ATCC 700610 / UA159).